The sequence spans 315 residues: Ankyrin repeat domain-containing protein EMB506, chloroplastic (315 aa).

The N-terminal 39 residues, 1 to 39 (MVSSVLSIPPQTCLLPRLPISDSVNCKSKIVYCLSTSVR), are a transit peptide targeting the chloroplast. Residues 44–65 (KRQSTARTRSFTETNRRTPSVQ) are compositionally biased toward polar residues. The segment at 44 to 106 (KRQSTARTRS…DNESDWEDDS (63 aa)) is disordered. The span at 72–104 (EDPDDGSDSENEYEGEEEDGIGNDLDNESDWED) shows a compositional bias: acidic residues. ANK repeat units follow at residues 151 to 180 (KSWK…DIDD), 184 to 213 (DNQT…NPHL), 217 to 246 (DGAA…DVNV), 250 to 279 (EGWT…DKTR), and 283 to 307 (DGKL…VKLL).

As to quaternary structure, interacts with AKR. No homodimerization observed. In terms of tissue distribution, expressed in roots, inflorescence stems, flowers, siliques, dry seeds and mature cauline leaves.

Its subcellular location is the plastid. It is found in the chloroplast. In terms of biological role, involved in the initial differentiation of the proplastid during the embryo development. Also required for correct cotyledon, true leaf and cauline leaf margin development. The chain is Ankyrin repeat domain-containing protein EMB506, chloroplastic (EMB506) from Arabidopsis thaliana (Mouse-ear cress).